The sequence spans 218 residues: Elongation factor Ts (218 aa).

The tract at residues 82–85 is involved in Mg(2+) ion dislocation from EF-Tu; the sequence is TDFV.

Belongs to the EF-Ts family.

The protein resides in the cytoplasm. Associates with the EF-Tu.GDP complex and induces the exchange of GDP to GTP. It remains bound to the aminoacyl-tRNA.EF-Tu.GTP complex up to the GTP hydrolysis stage on the ribosome. The polypeptide is Elongation factor Ts (Prochlorococcus marinus (strain MIT 9312)).